The sequence spans 443 residues: ASTRA-associated protein 1 (443 aa).

WD repeat units follow at residues Tyr23–His67, Glu71–Ile110, His258–Thr295, and Lys318–Thr359. The disordered stretch occupies residues Ser372–Ser391. Residues Thr378 to Ser391 show a composition bias toward low complexity.

This sequence belongs to the WD repeat ASA1 family. In terms of assembly, component of the ASTRA chromatin remodeling machinery complex composed of at least RVB1, RVB2, TRA1, TEL2, TTI1 and TTI2.

It localises to the nucleus. Component of the ASTRA complex involved in chromatin remodeling. This is ASTRA-associated protein 1 (ASA1) from Saccharomyces cerevisiae (strain RM11-1a) (Baker's yeast).